A 378-amino-acid chain; its full sequence is Erythronate-4-phosphate dehydrogenase (378 aa).

Substrate is bound by residues Ser-45 and Thr-66. Residues Asp-146 and Thr-175 each coordinate NAD(+). Arg-208 is a catalytic residue. Residue Asp-232 coordinates NAD(+). The active site involves Glu-237. His-254 functions as the Proton donor in the catalytic mechanism. Gly-257 contacts NAD(+). Tyr-258 lines the substrate pocket.

This sequence belongs to the D-isomer specific 2-hydroxyacid dehydrogenase family. PdxB subfamily. Homodimer.

The protein localises to the cytoplasm. The enzyme catalyses 4-phospho-D-erythronate + NAD(+) = (R)-3-hydroxy-2-oxo-4-phosphooxybutanoate + NADH + H(+). It participates in cofactor biosynthesis; pyridoxine 5'-phosphate biosynthesis; pyridoxine 5'-phosphate from D-erythrose 4-phosphate: step 2/5. Catalyzes the oxidation of erythronate-4-phosphate to 3-hydroxy-2-oxo-4-phosphonooxybutanoate. This Salmonella agona (strain SL483) protein is Erythronate-4-phosphate dehydrogenase.